The sequence spans 677 residues: MPAYDLTAPYTPKGDQPTAIKQLVQGVNGGERYQTLLGATGTGKTFTMANVIAQTGRPALVLAHNKTLAAQLCNELREFFPENAVEYFISYYDYYQPEAYVPVSDTYIAKTASINEEIDMLRHSATRSLFERRDVIVVASISCIYGLGIPSEYLKAAVKFEVGETLNIRSQLRELVNNQYSRNDTEIARGRFRMKGDVLEIGPAYEDRLVRIELFGDEVEAIRYVDPTTGEILQSLETVNIYPAKHFVTPKDRLDSAIGEIRQELRDRLDFLNGEGKLLEAQRLEQRTKYDLEMLGQVGYCNGVENYARHLAGREEGTPPECLIDYFPKDWLLIVDESHVTCSQLQAMYNGDQARKKVLIEHGFRLPSAADNRPLKGEEFWEKAHQTVFVSATPGNWELEVSGGEVAQQVIRPTGVLDPIVEVRPTTGQVDDLLGEIRDRASKQQRVLVTTLTKRMAEDLTDYLAENEVRVRYLHSEIHSIERIEIIQDLRLGEYDVLVGVNLLREGLDLPEVSLVAILDADKEGFLRAERSLIQTIGRAARHVEGVALLYADNMTESMAKAISETERRRKIQQTYNEKHGIVPTAAGKKASNSILSFLELSRKLKQDGPDADLVQVAGKAAQALEEDPDAGLALEALPELIDQLEGKMKEAAKKLDFEDAANLRDRIKQLRQKMAG.

A Helicase ATP-binding domain is found at 25-412; sequence QGVNGGERYQ…GGEVAQQVIR (388 aa). 38–45 serves as a coordination point for ATP; that stretch reads GATGTGKT. A Beta-hairpin motif is present at residues 91 to 114; that stretch reads YYDYYQPEAYVPVSDTYIAKTASI. A Helicase C-terminal domain is found at 429-591; sequence QVDDLLGEIR…IVPTAAGKKA (163 aa). Positions 639–674 constitute a UVR domain; it reads PELIDQLEGKMKEAAKKLDFEDAANLRDRIKQLRQK.

It belongs to the UvrB family. As to quaternary structure, forms a heterotetramer with UvrA during the search for lesions. Interacts with UvrC in an incision complex.

It is found in the cytoplasm. In terms of biological role, the UvrABC repair system catalyzes the recognition and processing of DNA lesions. A damage recognition complex composed of 2 UvrA and 2 UvrB subunits scans DNA for abnormalities. Upon binding of the UvrA(2)B(2) complex to a putative damaged site, the DNA wraps around one UvrB monomer. DNA wrap is dependent on ATP binding by UvrB and probably causes local melting of the DNA helix, facilitating insertion of UvrB beta-hairpin between the DNA strands. Then UvrB probes one DNA strand for the presence of a lesion. If a lesion is found the UvrA subunits dissociate and the UvrB-DNA preincision complex is formed. This complex is subsequently bound by UvrC and the second UvrB is released. If no lesion is found, the DNA wraps around the other UvrB subunit that will check the other stand for damage. This is UvrABC system protein B from Parasynechococcus marenigrum (strain WH8102).